The chain runs to 144 residues: Urease subunit beta (144 aa).

The protein belongs to the urease beta subunit family. In terms of assembly, heterotrimer of UreA (gamma), UreB (beta) and UreC (alpha) subunits. Three heterotrimers associate to form the active enzyme.

The protein resides in the cytoplasm. It carries out the reaction urea + 2 H2O + H(+) = hydrogencarbonate + 2 NH4(+). The protein operates within nitrogen metabolism; urea degradation; CO(2) and NH(3) from urea (urease route): step 1/1. This chain is Urease subunit beta, found in Yersinia pseudotuberculosis serotype O:1b (strain IP 31758).